A 48-amino-acid chain; its full sequence is MLLKNWPSRRIQRDKSKRAGIGGTNNRIPYTLLLCYVNVQKPFRIVDL.

Positions 1 to 20 are disordered; sequence MLLKNWPSRRIQRDKSKRAG.

This is an uncharacterized protein from Bacillus subtilis (strain 168).